Consider the following 309-residue polypeptide: UDP-N-acetylenolpyruvoylglucosamine reductase (309 aa).

The 166-residue stretch at 34–199 (RVGGPAQVLF…TSARLRGTPA (166 aa)) folds into the FAD-binding PCMH-type domain. Arg179 is a catalytic residue. Ser228 serves as the catalytic Proton donor. Residue Glu298 is part of the active site.

Belongs to the MurB family. FAD serves as cofactor.

Its subcellular location is the cytoplasm. The enzyme catalyses UDP-N-acetyl-alpha-D-muramate + NADP(+) = UDP-N-acetyl-3-O-(1-carboxyvinyl)-alpha-D-glucosamine + NADPH + H(+). The protein operates within cell wall biogenesis; peptidoglycan biosynthesis. In terms of biological role, cell wall formation. The protein is UDP-N-acetylenolpyruvoylglucosamine reductase of Rhodopseudomonas palustris (strain ATCC BAA-98 / CGA009).